A 491-amino-acid polypeptide reads, in one-letter code: UDP-N-acetylmuramate--L-alanine ligase (491 aa).

126 to 132 (GTHGKTT) is an ATP binding site.

This sequence belongs to the MurCDEF family.

The protein resides in the cytoplasm. It carries out the reaction UDP-N-acetyl-alpha-D-muramate + L-alanine + ATP = UDP-N-acetyl-alpha-D-muramoyl-L-alanine + ADP + phosphate + H(+). Its pathway is cell wall biogenesis; peptidoglycan biosynthesis. In terms of biological role, cell wall formation. This Enterobacter sp. (strain 638) protein is UDP-N-acetylmuramate--L-alanine ligase.